A 270-amino-acid polypeptide reads, in one-letter code: Probable ribosomal RNA small subunit methyltransferase A (270 aa).

Residues histidine 19, leucine 21, glycine 46, glutamate 67, aspartate 92, and asparagine 107 each contribute to the S-adenosyl-L-methionine site.

It belongs to the class I-like SAM-binding methyltransferase superfamily. rRNA adenine N(6)-methyltransferase family. RsmA subfamily.

The protein localises to the cytoplasm. Specifically dimethylates two adjacent adenosines in the loop of a conserved hairpin near the 3'-end of 16S rRNA in the 30S particle. May play a critical role in biogenesis of 30S subunits. This chain is Probable ribosomal RNA small subunit methyltransferase A, found in Methanococcoides burtonii (strain DSM 6242 / NBRC 107633 / OCM 468 / ACE-M).